Consider the following 91-residue polypeptide: Small ribosomal subunit protein uS15 (91 aa).

Belongs to the universal ribosomal protein uS15 family. Part of the 30S ribosomal subunit. Forms a bridge to the 50S subunit in the 70S ribosome, contacting the 23S rRNA.

Functionally, one of the primary rRNA binding proteins, it binds directly to 16S rRNA where it helps nucleate assembly of the platform of the 30S subunit by binding and bridging several RNA helices of the 16S rRNA. In terms of biological role, forms an intersubunit bridge (bridge B4) with the 23S rRNA of the 50S subunit in the ribosome. This Rickettsia bellii (strain OSU 85-389) protein is Small ribosomal subunit protein uS15.